We begin with the raw amino-acid sequence, 397 residues long: Elongation factor Tu (397 aa).

One can recognise a tr-type G domain in the interval 10–207; the sequence is KPHCNIGTIG…AVDEWIPQPE (198 aa). The interval 19–26 is G1; sequence GHVDHGKT. Residue 19–26 participates in GTP binding; sequence GHVDHGKT. Threonine 26 contributes to the Mg(2+) binding site. The tract at residues 61-65 is G2; it reads GITIS. The G3 stretch occupies residues 82-85; that stretch reads DCPG. GTP-binding positions include 82 to 86 and 137 to 140; these read DCPGH and NKVD. Residues 137–140 are G4; the sequence is NKVD. The interval 175–177 is G5; the sequence is SAL.

Belongs to the TRAFAC class translation factor GTPase superfamily. Classic translation factor GTPase family. EF-Tu/EF-1A subfamily. Monomer.

The protein localises to the cytoplasm. It catalyses the reaction GTP + H2O = GDP + phosphate + H(+). Its function is as follows. GTP hydrolase that promotes the GTP-dependent binding of aminoacyl-tRNA to the A-site of ribosomes during protein biosynthesis. This chain is Elongation factor Tu, found in Sphingopyxis alaskensis (strain DSM 13593 / LMG 18877 / RB2256) (Sphingomonas alaskensis).